Reading from the N-terminus, the 87-residue chain is Small ribosomal subunit protein bS20 (87 aa).

Positions 1–11 (MANHKSALKRI) are enriched in basic residues. The interval 1–23 (MANHKSALKRIKQTEKRTERNRH) is disordered.

Belongs to the bacterial ribosomal protein bS20 family.

In terms of biological role, binds directly to 16S ribosomal RNA. This is Small ribosomal subunit protein bS20 from Geotalea uraniireducens (strain Rf4) (Geobacter uraniireducens).